A 116-amino-acid polypeptide reads, in one-letter code: Endoribonuclease EndoA (116 aa).

It belongs to the PemK/MazF family. As to quaternary structure, homodimer. Forms a complex with antitoxin EndoAI in which the toxin activity is inhibited. One dimer binds a ssRNA substrate, forms a heterohexamer composed of alternating toxin and antitoxin homodimers which inhibits the endoribonuclease activity. Antitoxin prevents RNA binding to the endoribonuclease.

Its function is as follows. Toxic component of a type II toxin-antitoxin (TA) system. Specific for 5'-UACAU-3' sequences, cleaving after the first U. Yields cleavage products with 3' phosphate and 5' hydroxyl groups. Cannot digest substrate with a UUdUACAUAA cleavage site. Overexpression is toxic for cell growth (shown in E.coli), probably by inhibiting protein synthesis through the cleavage of single-stranded RNA. The toxicity is reversed by the antitoxin EndoAI. Toxin activity cannot be inhibited by MazE from E.coli. The EndoA-EndoAI complex does not seem to bind its own promoter. The sequence is that of Endoribonuclease EndoA from Bacillus subtilis (strain 168).